The sequence spans 188 residues: dCTP deaminase (188 aa).

Residues 111 to 116, 135 to 137, Gln156, Tyr170, and Gln180 contribute to the dCTP site; these read KSTYAR and TLE. The Proton donor/acceptor role is filled by Glu137.

It belongs to the dCTP deaminase family. Homotrimer.

It carries out the reaction dCTP + H2O + H(+) = dUTP + NH4(+). It participates in pyrimidine metabolism; dUMP biosynthesis; dUMP from dCTP (dUTP route): step 1/2. Functionally, catalyzes the deamination of dCTP to dUTP. The protein is dCTP deaminase of Pseudomonas putida (strain ATCC 700007 / DSM 6899 / JCM 31910 / BCRC 17059 / LMG 24140 / F1).